The chain runs to 502 residues: Glycerol kinase (502 aa).

Threonine 14 contributes to the ADP binding site. ATP-binding residues include threonine 14, threonine 15, and serine 16. Threonine 14 lines the sn-glycerol 3-phosphate pocket. Arginine 18 contributes to the ADP binding site. Sn-glycerol 3-phosphate contacts are provided by arginine 84, glutamate 85, tyrosine 137, and aspartate 247. Arginine 84, glutamate 85, tyrosine 137, aspartate 247, and glutamine 248 together coordinate glycerol. The ADP site is built by threonine 269 and glycine 312. ATP-binding residues include threonine 269, glycine 312, glutamine 316, and glycine 413. ADP-binding residues include glycine 413 and asparagine 417.

The protein belongs to the FGGY kinase family. In terms of assembly, homotetramer and homodimer (in equilibrium). Heterodimer with EIIA-Glc. Binds 1 zinc ion per glycerol kinase EIIA-Glc dimer. The zinc ion is important for dimerization.

The catalysed reaction is glycerol + ATP = sn-glycerol 3-phosphate + ADP + H(+). It functions in the pathway polyol metabolism; glycerol degradation via glycerol kinase pathway; sn-glycerol 3-phosphate from glycerol: step 1/1. Activity of this regulatory enzyme is affected by several metabolites. Allosterically and non-competitively inhibited by fructose 1,6-bisphosphate (FBP) and unphosphorylated phosphocarrier protein EIIA-Glc (III-Glc), an integral component of the bacterial phosphotransferase (PTS) system. In terms of biological role, key enzyme in the regulation of glycerol uptake and metabolism. Catalyzes the phosphorylation of glycerol to yield sn-glycerol 3-phosphate. The sequence is that of Glycerol kinase from Photorhabdus laumondii subsp. laumondii (strain DSM 15139 / CIP 105565 / TT01) (Photorhabdus luminescens subsp. laumondii).